Consider the following 769-residue polypeptide: Gephyrin (769 aa).

An MPT Mo-transferase region spans residues 14–153 (QIRVGVLTVS…LPGSKKGSQE (140 aa)). Residues 140–349 (LIINLPGSKK…VDITKVARRH (210 aa)) form an interaction with GABARAP region. Disordered regions lie at residues 181–232 (DELE…DSSS) and 260–299 (TASLSTTPSESPRAQATSRLSTASCPTPKQIRRPDESKGV). Residues 187 to 199 (PSPPPPLSPPPTT) are compositionally biased toward pro residues. Phosphoserine occurs at positions 188 and 194. Position 198 is a phosphothreonine (threonine 198). A Phosphoserine modification is found at serine 200. Cysteine 212 carries the S-palmitoyl cysteine lipid modification. The segment covering 261-286 (ASLSTTPSESPRAQATSRLSTASCPT) has biased composition (polar residues). Serine 262 is subject to Phosphoserine. 2 positions are modified to phosphothreonine: threonine 265 and threonine 266. Serine 268 and serine 270 each carry phosphoserine. Residue cysteine 284 is the site of S-palmitoyl cysteine attachment. The segment at 327 to 769 (SSKENILRAS…VVDVMVIGRL (443 aa)) is MPT adenylyltransferase. Residue serine 338 is modified to Phosphoserine.

The protein in the N-terminal section; belongs to the MoaB/Mog family. This sequence in the C-terminal section; belongs to the MoeA family. Homotrimer, homodimer and homooligomer. Interacts with SRGAP2 (via SH3 domain). Interacts with GLRB. Interacts with GABARAP. Interacts with GABRA3. GABRA3 and GLRB occupy overlapping binding sites. Interacts with ARHGAP32; IQSEC3, INSYN1 and INSYN2A. Mg(2+) is required as a cofactor. Post-translationally, palmitoylated. Palmitoylation is stimulated by GABA type A receptors activity. Palmitoylation by ZDHHC12 regulates clustering at synapses.

It localises to the postsynaptic cell membrane. It is found in the cell membrane. The protein localises to the cytoplasm. The protein resides in the cytosol. Its subcellular location is the cytoskeleton. It localises to the cell projection. It is found in the dendrite. The protein localises to the postsynaptic density. It carries out the reaction molybdopterin + ATP + H(+) = adenylyl-molybdopterin + diphosphate. The catalysed reaction is adenylyl-molybdopterin + molybdate = Mo-molybdopterin + AMP + H(+). It functions in the pathway cofactor biosynthesis; molybdopterin biosynthesis. Its activity is regulated as follows. Inhibited by copper and tungsten. Functionally, microtubule-associated protein involved in membrane protein-cytoskeleton interactions. It is thought to anchor the inhibitory glycine receptor (GLYR) to subsynaptic microtubules. Acts as a major instructive molecule at inhibitory synapses, where it also clusters GABA type A receptors. Also has a catalytic activity and catalyzes two steps in the biosynthesis of the molybdenum cofactor. In the first step, molybdopterin is adenylated. Subsequently, molybdate is inserted into adenylated molybdopterin and AMP is released. The sequence is that of Gephyrin (Gphn) from Mus musculus (Mouse).